A 312-amino-acid chain; its full sequence is Peroxidase (312 aa).

The signal sequence occupies residues 1 to 23 (MAMGSASCISLVVLVALATAASG). Gln-24 carries the post-translational modification Pyrrolidone carboxylic acid. 4 disulfides stabilise this stretch: Cys-34–Cys-107, Cys-67–Cys-70, Cys-113–Cys-307, and Cys-192–Cys-218. The active-site Proton acceptor is His-65. Positions 66, 69, 71, and 73 each coordinate Ca(2+). Residue Pro-155 coordinates substrate. His-185 contacts heme b. Thr-186 contacts Ca(2+). 3 residues coordinate Ca(2+): Asp-231, Thr-234, and Asp-239. A glycan (N-linked (GlcNAc...) asparagine) is linked at Asn-262.

It belongs to the peroxidase family. Classical plant (class III) peroxidase subfamily. It depends on Ca(2+) as a cofactor. Heme b serves as cofactor. As to expression, root.

It localises to the secreted. It catalyses the reaction 2 a phenolic donor + H2O2 = 2 a phenolic radical donor + 2 H2O. Removal of H(2)O(2), oxidation of toxic reductants, biosynthesis and degradation of lignin, suberization, auxin catabolism, response to environmental stresses such as wounding, pathogen attack and oxidative stress. These functions might be dependent on each isozyme/isoform in each plant tissue. Its function is as follows. Involved in defense response to powdery meldew fungus. This is Peroxidase from Triticum aestivum (Wheat).